A 637-amino-acid chain; its full sequence is Threonine--tRNA ligase (637 aa).

The region spanning 1 to 61 (MLNITLPDGS…TEDSSVQIIT (61 aa)) is the TGS domain. The tract at residues 242 to 533 (DHRKLGKQLD…LIENHAGSFP (292 aa)) is catalytic. Residues cysteine 333, histidine 384, and histidine 510 each contribute to the Zn(2+) site.

This sequence belongs to the class-II aminoacyl-tRNA synthetase family. As to quaternary structure, homodimer. Zn(2+) serves as cofactor.

It localises to the cytoplasm. It catalyses the reaction tRNA(Thr) + L-threonine + ATP = L-threonyl-tRNA(Thr) + AMP + diphosphate + H(+). Functionally, catalyzes the attachment of threonine to tRNA(Thr) in a two-step reaction: L-threonine is first activated by ATP to form Thr-AMP and then transferred to the acceptor end of tRNA(Thr). Also edits incorrectly charged L-seryl-tRNA(Thr). In Neisseria meningitidis serogroup C (strain 053442), this protein is Threonine--tRNA ligase.